We begin with the raw amino-acid sequence, 186 residues long: Cell division protein ZapC (186 aa).

Belongs to the ZapC family. As to quaternary structure, interacts directly with FtsZ.

The protein resides in the cytoplasm. Its function is as follows. Contributes to the efficiency of the cell division process by stabilizing the polymeric form of the cell division protein FtsZ. Acts by promoting interactions between FtsZ protofilaments and suppressing the GTPase activity of FtsZ. This Musicola paradisiaca (strain Ech703) (Dickeya paradisiaca) protein is Cell division protein ZapC.